The following is a 223-amino-acid chain: Putative germin-like protein 2-2 (223 aa).

The first 28 residues, 1–28 (MAAVGACFLQQLAVVALLALWCSHGAIA), serve as a signal peptide directing secretion. Cys-38 and Cys-53 are disulfide-bonded. One can recognise a Cupin type-1 domain in the interval 67-217 (SGLHMAGNTT…AFQVDKNIID (151 aa)). N-linked (GlcNAc...) asparagine glycosylation is found at Asn-74 and Asn-82. Residues His-115, His-117, Glu-122, and His-163 each coordinate Mn(2+). Residue Asn-168 is glycosylated (N-linked (GlcNAc...) asparagine).

It belongs to the germin family. As to quaternary structure, oligomer (believed to be a pentamer but probably hexamer).

The protein localises to the secreted. It localises to the extracellular space. Its subcellular location is the apoplast. Functionally, may play a role in plant defense. Probably has no oxalate oxidase activity even if the active site is conserved. This is Putative germin-like protein 2-2 from Oryza sativa subsp. japonica (Rice).